A 637-amino-acid polypeptide reads, in one-letter code: Extracellular metalloproteinase 10 (637 aa).

The signal sequence occupies residues 1 to 19 (MHGLLLAATLLSLPFNAVA). Positions 20–245 (HVPPTTGLVR…VHNVVDYVAH (226 aa)) are excised as a propeptide. N-linked (GlcNAc...) asparagine glycosylation is present at asparagine 282. Residue histidine 429 participates in Zn(2+) binding. The active site involves glutamate 430. Position 433 (histidine 433) interacts with Zn(2+). Asparagine 502 carries N-linked (GlcNAc...) asparagine glycosylation.

The protein belongs to the peptidase M36 family. It depends on Zn(2+) as a cofactor.

It is found in the secreted. Functionally, secreted metalloproteinase that allows assimilation of proteinaceous substrates. The chain is Extracellular metalloproteinase 10 (MEP10) from Uncinocarpus reesii (strain UAMH 1704).